A 207-amino-acid polypeptide reads, in one-letter code: Transcription antitermination protein NusB (207 aa).

This sequence belongs to the NusB family.

Its function is as follows. Involved in transcription antitermination. Required for transcription of ribosomal RNA (rRNA) genes. Binds specifically to the boxA antiterminator sequence of the ribosomal RNA (rrn) operons. In Trichodesmium erythraeum (strain IMS101), this protein is Transcription antitermination protein NusB.